The chain runs to 283 residues: Flagellar filament 35 kDa core protein (283 aa).

This sequence belongs to the bacterial flagellin family. The flagellum consists of two outer layers around a core that contains several antigenically related polypeptides.

Its subcellular location is the periplasmic flagellum. The protein resides in the periplasm. Component of the core of the flagella. This chain is Flagellar filament 35 kDa core protein (flaB), found in Leptospira interrogans serogroup Icterohaemorrhagiae serovar copenhageni (strain Fiocruz L1-130).